The sequence spans 380 residues: Lipid-A-disaccharide synthase (380 aa).

It belongs to the LpxB family.

It carries out the reaction a lipid X + a UDP-2-N,3-O-bis[(3R)-3-hydroxyacyl]-alpha-D-glucosamine = a lipid A disaccharide + UDP + H(+). It participates in bacterial outer membrane biogenesis; LPS lipid A biosynthesis. Condensation of UDP-2,3-diacylglucosamine and 2,3-diacylglucosamine-1-phosphate to form lipid A disaccharide, a precursor of lipid A, a phosphorylated glycolipid that anchors the lipopolysaccharide to the outer membrane of the cell. The sequence is that of Lipid-A-disaccharide synthase from Azotobacter vinelandii (strain DJ / ATCC BAA-1303).